We begin with the raw amino-acid sequence, 248 residues long: Small ribosomal subunit protein uS2c (248 aa).

The protein belongs to the universal ribosomal protein uS2 family.

It is found in the plastid. The protein resides in the chloroplast. The protein is Small ribosomal subunit protein uS2c (rps2) of Trachelium caeruleum (Blue throatwort).